The following is a 287-amino-acid chain: Cell division protein ZipA (287 aa).

A topological domain (periplasmic) is located at residue Met-1. Residues 2-22 traverse the membrane as a helical segment; the sequence is EIGLREWLIVIGIIVIAGILF. The Cytoplasmic portion of the chain corresponds to 23–287; that stretch reads DGWRRMRGGK…FERRALTQKR (265 aa). Residues 70–143 are disordered; the sequence is LDEHDLPSMS…APRQSVNDQP (74 aa).

This sequence belongs to the ZipA family. Interacts with FtsZ via their C-terminal domains.

Its subcellular location is the cell inner membrane. In terms of biological role, essential cell division protein that stabilizes the FtsZ protofilaments by cross-linking them and that serves as a cytoplasmic membrane anchor for the Z ring. Also required for the recruitment to the septal ring of downstream cell division proteins. The sequence is that of Cell division protein ZipA from Pseudomonas fluorescens (strain SBW25).